Reading from the N-terminus, the 222-residue chain is Phosphoribosylformylglycinamidine synthase subunit PurQ (222 aa).

The Glutamine amidotransferase type-1 domain maps to 3-222; sequence SAVIQLPGLN…LFESVLGRAA (220 aa). The Nucleophile role is filled by Cys86. Active-site residues include His196 and Glu198.

As to quaternary structure, part of the FGAM synthase complex composed of 1 PurL, 1 PurQ and 2 PurS subunits.

It localises to the cytoplasm. It carries out the reaction N(2)-formyl-N(1)-(5-phospho-beta-D-ribosyl)glycinamide + L-glutamine + ATP + H2O = 2-formamido-N(1)-(5-O-phospho-beta-D-ribosyl)acetamidine + L-glutamate + ADP + phosphate + H(+). The catalysed reaction is L-glutamine + H2O = L-glutamate + NH4(+). The protein operates within purine metabolism; IMP biosynthesis via de novo pathway; 5-amino-1-(5-phospho-D-ribosyl)imidazole from N(2)-formyl-N(1)-(5-phospho-D-ribosyl)glycinamide: step 1/2. In terms of biological role, part of the phosphoribosylformylglycinamidine synthase complex involved in the purines biosynthetic pathway. Catalyzes the ATP-dependent conversion of formylglycinamide ribonucleotide (FGAR) and glutamine to yield formylglycinamidine ribonucleotide (FGAM) and glutamate. The FGAM synthase complex is composed of three subunits. PurQ produces an ammonia molecule by converting glutamine to glutamate. PurL transfers the ammonia molecule to FGAR to form FGAM in an ATP-dependent manner. PurS interacts with PurQ and PurL and is thought to assist in the transfer of the ammonia molecule from PurQ to PurL. The polypeptide is Phosphoribosylformylglycinamidine synthase subunit PurQ (Chelativorans sp. (strain BNC1)).